The primary structure comprises 460 residues: tRNA modification GTPase MnmE (460 aa).

3 residues coordinate (6S)-5-formyl-5,6,7,8-tetrahydrofolate: R23, E86, and R126. The 160-residue stretch at 222 to 381 folds into the TrmE-type G domain; it reads GLSTAIIGRP…LEAAIASLFF (160 aa). N232 provides a ligand contact to K(+). GTP-binding positions include 232–237, 251–257, and 276–279; these read NVGKSS, TDIAGTT, and DTAG. S236 is a binding site for Mg(2+). K(+) contacts are provided by T251, I253, and T256. T257 provides a ligand contact to Mg(2+). A (6S)-5-formyl-5,6,7,8-tetrahydrofolate-binding site is contributed by K460.

The protein belongs to the TRAFAC class TrmE-Era-EngA-EngB-Septin-like GTPase superfamily. TrmE GTPase family. As to quaternary structure, homodimer. Heterotetramer of two MnmE and two MnmG subunits. K(+) serves as cofactor.

It is found in the cytoplasm. Its function is as follows. Exhibits a very high intrinsic GTPase hydrolysis rate. Involved in the addition of a carboxymethylaminomethyl (cmnm) group at the wobble position (U34) of certain tRNAs, forming tRNA-cmnm(5)s(2)U34. The sequence is that of tRNA modification GTPase MnmE from Exiguobacterium sibiricum (strain DSM 17290 / CCUG 55495 / CIP 109462 / JCM 13490 / 255-15).